The primary structure comprises 725 residues: Glutamine-dependent NAD(+) synthetase (725 aa).

Residues 4 to 274 (LKVATCNLNQ…VEVIISQVDL (271 aa)) form the CN hydrolase domain. Glutamate 44 acts as the Proton acceptor; for glutaminase activity in catalysis. Lysine 113 functions as the For glutaminase activity in the catalytic mechanism. The Nucleophile; for glutaminase activity role is filled by cysteine 174. Residues 324–709 (YHSPQEEIAF…FPEEEANSNK (386 aa)) are ligase. Residue 354–361 (PLSGGADS) coordinates ATP. Serine 356 is an active-site residue.

In the C-terminal section; belongs to the NAD synthetase family.

It catalyses the reaction deamido-NAD(+) + L-glutamine + ATP + H2O = L-glutamate + AMP + diphosphate + NAD(+) + H(+). It functions in the pathway cofactor biosynthesis; NAD(+) biosynthesis; NAD(+) from deamido-NAD(+) (L-Gln route): step 1/1. The sequence is that of Glutamine-dependent NAD(+) synthetase from Arabidopsis thaliana (Mouse-ear cress).